The following is a 157-amino-acid chain: Protein Smg homolog (157 aa).

Belongs to the Smg family.

This chain is Protein Smg homolog, found in Shewanella sediminis (strain HAW-EB3).